Here is a 142-residue protein sequence, read N- to C-terminus: Nucleoside diphosphate kinase (142 aa).

Lysine 11, phenylalanine 59, arginine 87, threonine 93, arginine 104, and asparagine 114 together coordinate ATP. Histidine 117 (pros-phosphohistidine intermediate) is an active-site residue.

Belongs to the NDK family. In terms of assembly, homotetramer. The cofactor is Mg(2+).

It localises to the cytoplasm. The catalysed reaction is a 2'-deoxyribonucleoside 5'-diphosphate + ATP = a 2'-deoxyribonucleoside 5'-triphosphate + ADP. The enzyme catalyses a ribonucleoside 5'-diphosphate + ATP = a ribonucleoside 5'-triphosphate + ADP. Functionally, major role in the synthesis of nucleoside triphosphates other than ATP. The ATP gamma phosphate is transferred to the NDP beta phosphate via a ping-pong mechanism, using a phosphorylated active-site intermediate. This Pectobacterium carotovorum subsp. carotovorum (strain PC1) protein is Nucleoside diphosphate kinase.